The sequence spans 328 residues: Alanine racemase (328 aa).

The active-site Proton acceptor; specific for D-alanine is K33. K33 carries the N6-(pyridoxal phosphate)lysine modification. R118 provides a ligand contact to substrate. The active-site Proton acceptor; specific for L-alanine is the Y237. Substrate is bound at residue M283.

This sequence belongs to the alanine racemase family. The cofactor is pyridoxal 5'-phosphate.

It catalyses the reaction L-alanine = D-alanine. It functions in the pathway amino-acid biosynthesis; D-alanine biosynthesis; D-alanine from L-alanine: step 1/1. Catalyzes the interconversion of L-alanine and D-alanine. May also act on other amino acids. In Campylobacter jejuni (strain RM1221), this protein is Alanine racemase (alr).